Consider the following 181-residue polypeptide: Putative ankyrin repeat protein RBE_0150 (181 aa).

4 ANK repeats span residues 50 to 79, 83 to 114, 118 to 147, and 151 to 180; these read IGQK…KLGT, LGRT…DINA, SGST…DYFT, and LGQT…AGYY.

This chain is Putative ankyrin repeat protein RBE_0150, found in Rickettsia bellii (strain RML369-C).